We begin with the raw amino-acid sequence, 156 residues long: Ribonuclease ageritin (156 aa).

The N-terminal stretch at 1 to 21 (MSESSTFTTAVVPEGEGVAPM) is a signal peptide. His98 is a catalytic residue. N-linked (GlcNAc...) asparagine glycans are attached at residues Asn100 and Asn139.

This sequence belongs to the ribotoxin-like family. In terms of assembly, monomer. Mg(2+) is required as a cofactor.

It is found in the vacuole lumen. The enzyme catalyses a 28S rRNA containing guanosine-adenosine pair + H2O = an [RNA fragment]-3'-adenosine-3'-phosphate + a 5'-a hydroxy-guanosine-3'-[RNA fragment].. Its activity is regulated as follows. In contrast to most ribotoxins, activity is completely inhibited by EDTA. Functionally, fungal ribonuclease involved in fungal defense. Highly specific and highly toxic fungal endonuclease that cleaves a single phosphodiester bond in the 28S RNA of eukaryotic ribosomes at a universally conserved GAGA tetraloop of the sarcin-ricin loop (SRL). The damage of the SRL inhibits the binding of translation elongation factors and halts protein biosynthesis, ultimately resulting in the death of the target cells. Shows antitumor activity. Exerts cytotoxicity and induces apoptosis towards rat glial cells and human glioma cells, and also displays some activity towards human neurolastoma cell lines. Shows a strong entomotoxicity against Aedes aegypti larvae, yet no nematotoxicity against nematodes. The sequence is that of Ribonuclease ageritin from Cyclocybe aegerita (Black poplar mushroom).